Reading from the N-terminus, the 401-residue chain is MTNRIVLAYSGGLDTTVAIPYLKKMIDGEVIAVSLDLGQGGENMDNVRQRALDAGAAESIVVDAKDEFAEEYCLPTIKANGMYMKQYPLVSAISRPLIVKHLVEAGKQFNGTHVAHGCTGKGNDQVRFEVGFMDTDPNLEIIAPARDFAWTRDKAIAFAEENNVPIEQSVKSPFSIDQNVWGRAIETGYLEDLWNAPTKDIYAYTEDPALGNAPDEVIISFEGGKPVSIDGRPVSVLQAIEELNRRAGAQGVGRLDMVEDRLVGIKSREIYEAPGAIALIKAHEALEDVTIERELARYKRGVDARWAEEVYDGLWFGPLKRSLDAFIDSTQEHVTGDIRMVLHAGSITINGRRSSHSLYDFNLATYDTGDTFDQTLAKGFVQLHGLSSKIANKRDREAGNN.

8 to 16 (AYSGGLDTT) lines the ATP pocket. Tyrosine 87 contacts L-citrulline. Glycine 117 serves as a coordination point for ATP. Threonine 119, asparagine 123, and aspartate 124 together coordinate L-aspartate. Position 123 (asparagine 123) interacts with L-citrulline. L-citrulline contacts are provided by arginine 127, serine 175, glutamate 259, and tyrosine 271.

This sequence belongs to the argininosuccinate synthase family. Type 1 subfamily. As to quaternary structure, homotetramer.

The protein resides in the cytoplasm. The enzyme catalyses L-citrulline + L-aspartate + ATP = 2-(N(omega)-L-arginino)succinate + AMP + diphosphate + H(+). It functions in the pathway amino-acid biosynthesis; L-arginine biosynthesis; L-arginine from L-ornithine and carbamoyl phosphate: step 2/3. The sequence is that of Argininosuccinate synthase from Corynebacterium glutamicum (strain ATCC 13032 / DSM 20300 / JCM 1318 / BCRC 11384 / CCUG 27702 / LMG 3730 / NBRC 12168 / NCIMB 10025 / NRRL B-2784 / 534).